The chain runs to 654 residues: Polyvinylalcohol dehydrogenase (654 aa).

Residues 1-32 (MGSHAWGGAVFSAATLIAFGSVVHASGTVAET) form the signal peptide. Positions 42–159 (ADQLDGETLY…AANQWNGWST (118 aa)) constitute a Cytochrome c domain. Positions 55, 58, and 59 each coordinate heme c.

Belongs to the bacterial PQQ dehydrogenase family. In terms of assembly, monomer. The cofactor is pyrroloquinoline quinone.

It localises to the periplasm. It carries out the reaction a polyvinyl alcohol + 2n Fe(III)-[cytochrome c] = an oxidized polyvinyl alcohol + 2n Fe(II)-[cytochrome c] + 2n H(+). Its function is as follows. Catalyzes the oxidation of polyvinyl alcohol (PVA) in the polyvinyl alcohol degradation pathway. The polypeptide is Polyvinylalcohol dehydrogenase (pvadh) (Sphingopyxis sp. (strain 113P3)).